The primary structure comprises 209 residues: N-acetyltransferase aca1 (209 aa).

The N-acetyltransferase domain occupies 26–202 (TNVKNKEELL…DAYIYQYHFP (177 aa)). Substrate is bound at residue Asn-118. 128 to 133 (RSKGIG) contacts CoA. Residue 155–156 (NL) participates in substrate binding.

Belongs to the acetyltransferase family. As to quaternary structure, homodimer.

The protein localises to the cytoplasm. It is found in the mitochondrion. The enzyme catalyses L-glutamate 5-semialdehyde + acetyl-CoA = N-acetyl-L-glutamate 5-semialdehyde + CoA + H(+). In terms of biological role, N-acetyltransferase involved in oxidative stress resistance. Acetylates the toxic proline metabolism intermediate (S)-1-pyrroline-5-carboxylate (P5C), or more likely its spontaneously forming tautomer glutamate-5-semialdehyde (GSA) into N-acetyl-GSA for arginine synthesis in the mitochondria. P5C has been shown to increase the levels of reactive oxygen species (ROS) in the cell by inhibiting the function of the respiratory chain in the mitochondria. The enzyme is able to reduce intracellular ROS levels under P5C-induced oxidative stress and protects cells from damage by oxidative stress. Also acetylates and thereby detoxifies the proline analog azetidine-2-carboxylate (AZC), however it is unlikely that AZC is a natural substrate as it occurs only in plants belonging to the Lilaceae family. This is N-acetyltransferase aca1 from Schizosaccharomyces pombe (strain 972 / ATCC 24843) (Fission yeast).